Consider the following 370-residue polypeptide: D-alanine--D-alanine ligase (370 aa).

The region spanning 144-352 (KKIFADAGIP…YGALIERLVD (209 aa)) is the ATP-grasp domain. 177–232 (EEVLTYPVFVKPANLGSSVGISKATNKKELADAMTEAFLYDRRVVVEQGVVAREIE) contributes to the ATP binding site. Asp306, Glu319, and Asn321 together coordinate Mg(2+).

It belongs to the D-alanine--D-alanine ligase family. Mg(2+) serves as cofactor. Requires Mn(2+) as cofactor.

Its subcellular location is the cytoplasm. It catalyses the reaction 2 D-alanine + ATP = D-alanyl-D-alanine + ADP + phosphate + H(+). It participates in cell wall biogenesis; peptidoglycan biosynthesis. Its function is as follows. Cell wall formation. The sequence is that of D-alanine--D-alanine ligase from Listeria monocytogenes serotype 4b (strain F2365).